Consider the following 101-residue polypeptide: MAKQSMKAREVKRVALADKYFAKRAELKAIISDVNASDEDRWNAVLKLQSLPRDSSPSRQRNRCRQTGRPHGYVGKFGLSRIKLREAAMRGEVPGLKKASW.

The tract at residues 51–70 (LPRDSSPSRQRNRCRQTGRP) is disordered.

The protein belongs to the universal ribosomal protein uS14 family. In terms of assembly, part of the 30S ribosomal subunit. Contacts proteins S3 and S10.

Its function is as follows. Binds 16S rRNA, required for the assembly of 30S particles and may also be responsible for determining the conformation of the 16S rRNA at the A site. The protein is Small ribosomal subunit protein uS14 of Salmonella arizonae (strain ATCC BAA-731 / CDC346-86 / RSK2980).